The chain runs to 187 residues: Superoxide dismutase [Cu-Zn] (187 aa).

An N-terminal signal peptide occupies residues 1–21 (MSLLPTGTLILLVLFILVLIT). Cu cation contacts are provided by histidine 76, histidine 78, and histidine 93. A disulfide bond links cysteine 87 and cysteine 176. Residues histidine 93, histidine 101, histidine 110, and aspartate 113 each contribute to the Zn(2+) site. Residue histidine 150 participates in Cu cation binding.

Belongs to the Cu-Zn superoxide dismutase family. The cofactor is Cu cation. Zn(2+) is required as a cofactor.

The catalysed reaction is 2 superoxide + 2 H(+) = H2O2 + O2. Destroys radicals which are normally produced within the cells and which are toxic to biological systems. This is Superoxide dismutase [Cu-Zn] from Chlorella (PBCV-1).